Reading from the N-terminus, the 207-residue chain is Large ribosomal subunit protein uL4 (207 aa).

Belongs to the universal ribosomal protein uL4 family. In terms of assembly, part of the 50S ribosomal subunit.

Its function is as follows. One of the primary rRNA binding proteins, this protein initially binds near the 5'-end of the 23S rRNA. It is important during the early stages of 50S assembly. It makes multiple contacts with different domains of the 23S rRNA in the assembled 50S subunit and ribosome. Forms part of the polypeptide exit tunnel. The chain is Large ribosomal subunit protein uL4 from Rickettsia peacockii (strain Rustic).